Reading from the N-terminus, the 339-residue chain is Ketol-acid reductoisomerase (NADP(+)) (339 aa).

In terms of domain architecture, KARI N-terminal Rossmann spans 1–182 (MRVYYDRDAD…GGGRAGIIET (182 aa)). NADP(+)-binding positions include 24 to 27 (YGSQ), arginine 48, serine 51, threonine 53, and 83 to 86 (DELQ). Residue histidine 108 is part of the active site. An NADP(+)-binding site is contributed by glycine 134. A KARI C-terminal knotted domain is found at 183–328 (TFREECETDL…AKLREMMPWI (146 aa)). Mg(2+) contacts are provided by aspartate 191, glutamate 195, glutamate 227, and glutamate 231. Serine 252 provides a ligand contact to substrate.

This sequence belongs to the ketol-acid reductoisomerase family. The cofactor is Mg(2+).

It catalyses the reaction (2R)-2,3-dihydroxy-3-methylbutanoate + NADP(+) = (2S)-2-acetolactate + NADPH + H(+). The enzyme catalyses (2R,3R)-2,3-dihydroxy-3-methylpentanoate + NADP(+) = (S)-2-ethyl-2-hydroxy-3-oxobutanoate + NADPH + H(+). Its pathway is amino-acid biosynthesis; L-isoleucine biosynthesis; L-isoleucine from 2-oxobutanoate: step 2/4. It participates in amino-acid biosynthesis; L-valine biosynthesis; L-valine from pyruvate: step 2/4. Involved in the biosynthesis of branched-chain amino acids (BCAA). Catalyzes an alkyl-migration followed by a ketol-acid reduction of (S)-2-acetolactate (S2AL) to yield (R)-2,3-dihydroxy-isovalerate. In the isomerase reaction, S2AL is rearranged via a Mg-dependent methyl migration to produce 3-hydroxy-3-methyl-2-ketobutyrate (HMKB). In the reductase reaction, this 2-ketoacid undergoes a metal-dependent reduction by NADPH to yield (R)-2,3-dihydroxy-isovalerate. The protein is Ketol-acid reductoisomerase (NADP(+)) of Rhodopseudomonas palustris (strain BisA53).